The following is a 192-amino-acid chain: MSLRIVHYNDPVLRRKGEKITAFDKALSQLAKEMLATMQEAAGIGLAAQQIGRPVQLCVVDLRRAEIDFTWELDGAKPPLDLIMPMIITNPEITPDRETDVYLVEEGCLSFPKIRGDVPRPDAITVRYQDEHGTPHTLHCDGLLARCIQHEVDHLNGVLFIDRMEKKTRAAIDADVKTLAKITRAAAKLNPA.

Fe cation contacts are provided by Cys108 and His150. The active site involves Glu151. Fe cation is bound at residue His154.

Belongs to the polypeptide deformylase family. Fe(2+) is required as a cofactor.

It catalyses the reaction N-terminal N-formyl-L-methionyl-[peptide] + H2O = N-terminal L-methionyl-[peptide] + formate. Its function is as follows. Removes the formyl group from the N-terminal Met of newly synthesized proteins. Requires at least a dipeptide for an efficient rate of reaction. N-terminal L-methionine is a prerequisite for activity but the enzyme has broad specificity at other positions. The sequence is that of Peptide deformylase from Opitutus terrae (strain DSM 11246 / JCM 15787 / PB90-1).